The following is a 128-amino-acid chain: Aspartate 1-decarboxylase (128 aa).

Catalysis depends on Ser25, which acts as the Schiff-base intermediate with substrate; via pyruvic acid. Residue Ser25 is modified to Pyruvic acid (Ser). Substrate is bound at residue Thr57. Catalysis depends on Tyr58, which acts as the Proton donor. 73–75 (GSA) contributes to the substrate binding site.

The protein belongs to the PanD family. As to quaternary structure, heterooctamer of four alpha and four beta subunits. Pyruvate serves as cofactor. In terms of processing, is synthesized initially as an inactive proenzyme, which is activated by self-cleavage at a specific serine bond to produce a beta-subunit with a hydroxyl group at its C-terminus and an alpha-subunit with a pyruvoyl group at its N-terminus.

The protein localises to the cytoplasm. It catalyses the reaction L-aspartate + H(+) = beta-alanine + CO2. It functions in the pathway cofactor biosynthesis; (R)-pantothenate biosynthesis; beta-alanine from L-aspartate: step 1/1. In terms of biological role, catalyzes the pyruvoyl-dependent decarboxylation of aspartate to produce beta-alanine. In Burkholderia cenocepacia (strain HI2424), this protein is Aspartate 1-decarboxylase.